The following is a 76-amino-acid chain: Putative membrane protein insertion efficiency factor (76 aa).

This sequence belongs to the UPF0161 family.

It localises to the cell inner membrane. Functionally, could be involved in insertion of integral membrane proteins into the membrane. In Porphyromonas gingivalis (strain ATCC 33277 / DSM 20709 / CIP 103683 / JCM 12257 / NCTC 11834 / 2561), this protein is Putative membrane protein insertion efficiency factor.